Reading from the N-terminus, the 1377-residue chain is DNA-directed RNA polymerase subunit beta' (1377 aa).

The Zn(2+) site is built by Cys60, Cys62, Cys75, and Cys78. Positions 449, 451, and 453 each coordinate Mg(2+). 4 residues coordinate Zn(2+): Cys777, Cys851, Cys858, and Cys861.

This sequence belongs to the RNA polymerase beta' chain family. In terms of assembly, the RNAP catalytic core consists of 2 alpha, 1 beta, 1 beta' and 1 omega subunit. When a sigma factor is associated with the core the holoenzyme is formed, which can initiate transcription. Mg(2+) serves as cofactor. It depends on Zn(2+) as a cofactor.

The catalysed reaction is RNA(n) + a ribonucleoside 5'-triphosphate = RNA(n+1) + diphosphate. Functionally, DNA-dependent RNA polymerase catalyzes the transcription of DNA into RNA using the four ribonucleoside triphosphates as substrates. In Borreliella burgdorferi (strain ATCC 35210 / DSM 4680 / CIP 102532 / B31) (Borrelia burgdorferi), this protein is DNA-directed RNA polymerase subunit beta'.